The chain runs to 400 residues: Na(+)/H(+) antiporter NhaA (400 aa).

11 consecutive transmembrane segments (helical) span residues 9–29 (FLVSEASGGIFLIAAAVIAMV), 60–80 (LILWVNDGLMAIFFFVLGLEL), 96–116 (VLPAVGAIGGIVVPAFIFYLF), 127–147 (WAIPTATDTAFALGIIMILGA), 155–175 (IFLVTLAIIDDVCAILIMAIF), 180–200 (LSLISFGVAAIVILGLLALNL), 210–230 (LILGIILWISVLKSGVHATLA), 263–283 (YFVLPVFAFVNAGISLKGIGL), 294–314 (VILGLFLGKQIGVFGFCFVAI), 327–347 (WISFYGLCILTGIGFTMSLFI), and 366–386 (VLIASVISGVLGYIVLYIASV).

Belongs to the NhaA Na(+)/H(+) (TC 2.A.33) antiporter family.

It localises to the cell inner membrane. It carries out the reaction Na(+)(in) + 2 H(+)(out) = Na(+)(out) + 2 H(+)(in). Functionally, na(+)/H(+) antiporter that extrudes sodium in exchange for external protons. The protein is Na(+)/H(+) antiporter NhaA of Campylobacter curvus (strain 525.92).